The primary structure comprises 335 residues: Gibberellin 2-beta-dioxygenase 3 (335 aa).

The region spanning 175–278 (ESDSCLRMNH…RISMIYFAGP (104 aa)) is the Fe2OG dioxygenase domain. Residues H202, D204, and H259 each coordinate Fe cation. The active site involves R269.

The protein belongs to the iron/ascorbate-dependent oxidoreductase family. GA2OX subfamily. Fe(2+) serves as cofactor. As to expression, not expressed in the apex.

The enzyme catalyses gibberellin A1 + 2-oxoglutarate + O2 = gibberellin A8 + succinate + CO2. The protein operates within plant hormone biosynthesis; gibberellin biosynthesis. In terms of biological role, catalyzes the 2-beta-hydroxylation of several biologically active gibberellins, leading to the homeostatic regulation of their endogenous level. Catabolism of gibberellins (GAs) plays a central role in plant development. Converts GA9/GA20 to GA51/GA29 and GA4/GA1 to GA34/GA8. The polypeptide is Gibberellin 2-beta-dioxygenase 3 (GA2OX3) (Arabidopsis thaliana (Mouse-ear cress)).